We begin with the raw amino-acid sequence, 141 residues long: Transcription antitermination protein NusB (141 aa).

Belongs to the NusB family.

Involved in transcription antitermination. Required for transcription of ribosomal RNA (rRNA) genes. Binds specifically to the boxA antiterminator sequence of the ribosomal RNA (rrn) operons. This Treponema pallidum (strain Nichols) protein is Transcription antitermination protein NusB.